An 897-amino-acid chain; its full sequence is uncharacterized protein (897 aa).

2 disordered regions span residues arginine 25–arginine 89 and proline 106–serine 168. Low complexity-rich tracts occupy residues serine 32–serine 44, serine 57–leucine 68, and proline 106–serine 142. The 184-residue stretch at serine 263–lysine 446 folds into the Helicase ATP-binding domain. Residue aspartate 276–threonine 283 participates in ATP binding. Residues aspartate 397 to histidine 400 carry the DEAH box motif. An RING-type zinc finger spans residues cysteine 606–arginine 655. The 164-residue stretch at glutamine 727 to leucine 890 folds into the Helicase C-terminal domain.

Belongs to the SNF2/RAD54 helicase family.

The protein resides in the cytoplasm. Its subcellular location is the nucleus. This is an uncharacterized protein from Schizosaccharomyces pombe (strain 972 / ATCC 24843) (Fission yeast).